Consider the following 325-residue polypeptide: uncharacterized protein (325 aa).

Residues 37-85 (EKPTYTPAKPVKKAPSVVQPRRVSRTLRSSESVHTNHGPERVFESPTPA) form a disordered region. Serine 52 carries the post-translational modification Phosphoserine. The span at 62–71 (TLRSSESVHT) shows a compositional bias: polar residues. Positions 153-311 (EDEGKKCLIL…IDLIPFLEHL (159 aa)) constitute an FCP1 homology domain.

This is an uncharacterized protein from Schizosaccharomyces pombe (strain 972 / ATCC 24843) (Fission yeast).